A 178-amino-acid polypeptide reads, in one-letter code: Peptidyl-prolyl cis-trans isomerase (178 aa).

The signal sequence occupies residues 1–17 (MKLLFFFLVLAVSAAVA). The 152-residue stretch at 26-177 (FMDIEIDGES…KIAKITDIGL (152 aa)) folds into the PPIase cyclophilin-type domain.

Belongs to the cyclophilin-type PPIase family. PPIase A subfamily.

The catalysed reaction is [protein]-peptidylproline (omega=180) = [protein]-peptidylproline (omega=0). In terms of biological role, PPIases accelerate the folding of proteins. It catalyzes the cis-trans isomerization of proline imidic peptide bonds in oligopeptides. Up-regulates interferon gamma production by bovine T-cells. Stimulates high levels of IFN-gamma production by peripheral blood mononuclear cells and T-cells. The IFN-gamma-inducing effect is blocked by cyclosporin A (CsA). This is Peptidyl-prolyl cis-trans isomerase from Neospora caninum (Coccidian parasite).